We begin with the raw amino-acid sequence, 163 residues long: Nucleotide-binding protein PMI0103 (163 aa).

It belongs to the YajQ family.

Nucleotide-binding protein. This is Nucleotide-binding protein PMI0103 from Proteus mirabilis (strain HI4320).